Reading from the N-terminus, the 567-residue chain is Dihydroxy-acid dehydratase (567 aa).

C57 contacts [2Fe-2S] cluster. Residue D89 coordinates Mg(2+). A [2Fe-2S] cluster-binding site is contributed by C130. Mg(2+)-binding residues include D131 and K132. The residue at position 132 (K132) is an N6-carboxylysine. C202 contributes to the [2Fe-2S] cluster binding site. Mg(2+) is bound at residue E453. S479 acts as the Proton acceptor in catalysis.

It belongs to the IlvD/Edd family. Homodimer. The cofactor is [2Fe-2S] cluster. Requires Mg(2+) as cofactor.

It catalyses the reaction (2R)-2,3-dihydroxy-3-methylbutanoate = 3-methyl-2-oxobutanoate + H2O. The catalysed reaction is (2R,3R)-2,3-dihydroxy-3-methylpentanoate = (S)-3-methyl-2-oxopentanoate + H2O. It participates in amino-acid biosynthesis; L-isoleucine biosynthesis; L-isoleucine from 2-oxobutanoate: step 3/4. Its pathway is amino-acid biosynthesis; L-valine biosynthesis; L-valine from pyruvate: step 3/4. In terms of biological role, functions in the biosynthesis of branched-chain amino acids. Catalyzes the dehydration of (2R,3R)-2,3-dihydroxy-3-methylpentanoate (2,3-dihydroxy-3-methylvalerate) into 2-oxo-3-methylpentanoate (2-oxo-3-methylvalerate) and of (2R)-2,3-dihydroxy-3-methylbutanoate (2,3-dihydroxyisovalerate) into 2-oxo-3-methylbutanoate (2-oxoisovalerate), the penultimate precursor to L-isoleucine and L-valine, respectively. The polypeptide is Dihydroxy-acid dehydratase (Nocardioides sp. (strain ATCC BAA-499 / JS614)).